We begin with the raw amino-acid sequence, 291 residues long: MLEIVIITGMSGAGKSLAIRAFEDMGFFCIDNLPPQFLPKIAELASATKEKISRIAAVVDIRGGELFDDFKDVLQELKKDDRNFKLLFLDAHDEVLIKRYKETRRKHPLSHEGDGSILEAIQKEREKLEDIKRYADFVIDTSTLLPKDLKEKLFEIFVQQKSKEAMLITIMSFGFKYGLPLDADLVFDVRFIPNPFYVDTLKYKTGKDPEVKEYVLKWDVTKEFLQKLFDLILFLIPNYAEEGKGQLVIAIGCTGGKHRSVTVAEELKKTIENQGYKVSIFHRDIEKDIKG.

Residue 9 to 16 coordinates ATP; it reads GMSGAGKS. Residue 60–63 participates in GTP binding; sequence DIRG.

The protein belongs to the RapZ-like family.

Displays ATPase and GTPase activities. This is Nucleotide-binding protein Athe_0320 from Caldicellulosiruptor bescii (strain ATCC BAA-1888 / DSM 6725 / KCTC 15123 / Z-1320) (Anaerocellum thermophilum).